A 101-amino-acid chain; its full sequence is Growth-regulated alpha protein (101 aa).

A signal peptide spans 1-28 (MAPATRSLLRAPLLLLLLLLATSRLATG). Intrachain disulfides connect Cys-37/Cys-63 and Cys-39/Cys-79.

The protein belongs to the intercrine alpha (chemokine CxC) family.

The protein resides in the secreted. Its function is as follows. Has chemotactic activity for neutrophils. This chain is Growth-regulated alpha protein (CXCL1), found in Cricetulus griseus (Chinese hamster).